The following is a 168-amino-acid chain: uncharacterized protein (168 aa).

Residues 1–29 (MGWRFPSPSPRQASPVAPLLAAPTAVRSC) constitute a mitochondrion transit peptide. The segment covering 98–110 (GETKARRAREEGK) has biased composition (basic and acidic residues). Residues 98-152 (GETKARRAREEGKLPSLGNAPAPRRRSVAWPAAEGSCAAPESSPPASEASLPAPE) are disordered. Residues 128–152 (PAAEGSCAAPESSPPASEASLPAPE) show a composition bias toward low complexity.

Its subcellular location is the mitochondrion. This is an uncharacterized protein from Homo sapiens (Human).